Reading from the N-terminus, the 432-residue chain is D-amino acid dehydrogenase (432 aa).

FAD is bound at residue 3-17 (VVILGSGVVGVASAW).

It belongs to the DadA oxidoreductase family. FAD is required as a cofactor.

The catalysed reaction is a D-alpha-amino acid + A + H2O = a 2-oxocarboxylate + AH2 + NH4(+). The protein operates within amino-acid degradation; D-alanine degradation; NH(3) and pyruvate from D-alanine: step 1/1. Functionally, oxidative deamination of D-amino acids. The polypeptide is D-amino acid dehydrogenase (Escherichia coli O127:H6 (strain E2348/69 / EPEC)).